Consider the following 552-residue polypeptide: MAFQEILESLGGMGRYQVIHVVLLSLPVFMLASHNLMQNFTAATPSHHCRINGTYEETNFTGPWLRALLPMTPTGEFSKCLRYTTPQYELLENNLTQSYDDLETEPCLDGWVYDHSEFASTIITQWDLVCNHRRMRQVAQSIYMAGVLVGSILFGGLSDKFGRRPLNIWSNLQMFVTGICAAFSPNYIWYCIFRFLTGVAFSGIVLNSYSLTVEWIPTGNRAFTSTATGYCYTMGQLVLVGLAFIIRDWQWLQLAASIPFFFYFLYSWWIPESGRWLVLSGKPEVACKALKKVAQINGKKEAGEKLTVEILKSSMQREINASHNSTYSALDLVRTPVVRRISFCISCTWFSTSFAYYGLALDLQSFGVSIYIIQIIFGTVDIPAKFISYFITTYVGRRVSQAITLILAGIAILVNISVPQDFQTVRTAMAVFGKGCLAASFNCLYLYTGELYPTVIRQTGMGLGAMMARLGGIIAPLAQMTGDIYHSLPLIIFGCLPILSGIAGCFLPETLGVPLPETIEEVESPDKQQKDVNVSAKIPLKETELYNMKTDV.

The Cytoplasmic portion of the chain corresponds to 1–16 (MAFQEILESLGGMGRY). A helical transmembrane segment spans residues 17–37 (QVIHVVLLSLPVFMLASHNLM). The Extracellular portion of the chain corresponds to 38-137 (QNFTAATPSH…LVCNHRRMRQ (100 aa)). Residues 138-158 (VAQSIYMAGVLVGSILFGGLS) form a helical membrane-spanning segment. Topologically, residues 159-164 (DKFGRR) are cytoplasmic. A helical membrane pass occupies residues 165-184 (PLNIWSNLQMFVTGICAAFS). Pro-185 is a topological domain (extracellular). A helical transmembrane segment spans residues 186–206 (NYIWYCIFRFLTGVAFSGIVL). The Cytoplasmic segment spans residues 207 to 225 (NSYSLTVEWIPTGNRAFTS). The helical transmembrane segment at 226 to 246 (TATGYCYTMGQLVLVGLAFII) threads the bilayer. The Extracellular segment spans residues 247 to 250 (RDWQ). A helical membrane pass occupies residues 251–271 (WLQLAASIPFFFYFLYSWWIP). At 272 to 336 (ESGRWLVLSG…YSALDLVRTP (65 aa)) the chain is on the cytoplasmic side. A helical membrane pass occupies residues 337–356 (VVRRISFCISCTWFSTSFAY). Residue Tyr-357 is a topological domain, extracellular. A helical transmembrane segment spans residues 358-378 (GLALDLQSFGVSIYIIQIIFG). Residues 379–398 (TVDIPAKFISYFITTYVGRR) are Cytoplasmic-facing. The chain crosses the membrane as a helical span at residues 399–419 (VSQAITLILAGIAILVNISVP). At 420 to 426 (QDFQTVR) the chain is on the extracellular side. The helical transmembrane segment at 427 to 447 (TAMAVFGKGCLAASFNCLYLY) threads the bilayer. The Cytoplasmic segment spans residues 448–459 (TGELYPTVIRQT). A helical transmembrane segment spans residues 460–480 (GMGLGAMMARLGGIIAPLAQM). The Extracellular portion of the chain corresponds to 481-487 (TGDIYHS). A helical membrane pass occupies residues 488 to 508 (LPLIIFGCLPILSGIAGCFLP). Residues 509–552 (ETLGVPLPETIEEVESPDKQQKDVNVSAKIPLKETELYNMKTDV) are Cytoplasmic-facing.

This sequence belongs to the major facilitator (TC 2.A.1) superfamily. Organic cation transporter (TC 2.A.1.19) family. In terms of processing, glycosylated. Glycosylation is necessary for proper targeting of the transporter to the plasma membrane.

The protein resides in the cell membrane. Its subcellular location is the basolateral cell membrane. It localises to the basal cell membrane. Its function is as follows. Involved in the renal elimination of endogenous and exogenous organic anions. Mediates the sodium-independent uptake of p-aminohippurate (PAH), cidofovir, adefovir, 9-(2-phosphonylmethoxyethyl) guanine (PMEG), 9-(2-phosphonylmethoxyethyl) diaminopurine (PMEDAP) and edaravone sulfate. PAH uptake is inhibited by furosemide, steviol, phorbol 12-myristate 13-acetate (PMA), calcium ionophore A23187, benzylpenicillin, furosemide, indomethacin, bumetamide, losartan, probenecid, phenol red, urate, and alpha-ketoglutarate. The chain is Solute carrier family 22 member 6-B (slc22a6-b) from Xenopus laevis (African clawed frog).